Reading from the N-terminus, the 764-residue chain is Irregular chiasm C-roughest protein (764 aa).

An N-terminal signal peptide occupies residues 1–19 (MLHTMQLLLLATIVGMVRS). The Extracellular segment spans residues 20–533 (SPYTSYQNQR…QAKKSVSLLM (514 aa)). Ig-like C2-type domains lie at 21–120 (PYTS…PAIR), 132–230 (PEAP…AKIR), 237–343 (PKVK…LDIS), 346–419 (PSFR…AEIS), and 430–530 (PAIG…KSVS). Disulfide bonds link cysteine 49–cysteine 107, cysteine 155–cysteine 214, cysteine 281–cysteine 325, cysteine 367–cysteine 408, and cysteine 450–cysteine 508. N-linked (GlcNAc...) asparagine glycosylation is found at asparagine 211, asparagine 313, asparagine 393, asparagine 400, and asparagine 507. The helical transmembrane segment at 534 to 556 (TIVGGISVVAFLLVLTILVVVYI) threads the bilayer. Residues 557-764 (KCKKRTKLPP…SSLLPPPTAV (208 aa)) are Cytoplasmic-facing. Disordered stretches follow at residues 640–660 (HQNQ…HHTQ) and 691–719 (NGLP…STTA). The span at 692–701 (GLPSLQSTTA) shows a compositional bias: polar residues. Residues 702–719 (SVVSSSPNGSCSNQSTTA) show a composition bias toward low complexity.

As to expression, postembryonic expression is strong in the developing optic lobe and in the eye imaginal disk.

Its subcellular location is the membrane. In terms of biological role, required for correct axonal pathway formation in the optic lobe and for programmed cell death in the developing retina. This is Irregular chiasm C-roughest protein (rst) from Drosophila melanogaster (Fruit fly).